The sequence spans 153 residues: MKSWEIAVVLVAAVYLCSQVNFVAGLECYVCSNQTGNTEKCLNTIKTCEPFENVCGTEIRWGSQPYFSEGALKQYYVSKRCMTKEQCQSKRKRYMQLYCTHIWYEDWACNECCKGDRCNYFVISGAPSRQGYGVCLTLLTALLGLGSWLIPRS.

An N-terminal signal peptide occupies residues 1–25 (MKSWEIAVVLVAAVYLCSQVNFVAG). The Extracellular segment spans residues 26–130 (LECYVCSNQT…FVISGAPSRQ (105 aa)). Disulfide bonds link Cys-28–Cys-55, Cys-31–Cys-41, Cys-48–Cys-81, Cys-87–Cys-112, Cys-99–Cys-109, and Cys-113–Cys-118. Asn-33 carries an N-linked (GlcNAc...) asparagine glycan. A lipid anchor (GPI-anchor amidated serine) is attached at Ser-124. Positions 125–153 (GAPSRQGYGVCLTLLTALLGLGSWLIPRS) are cleaved as a propeptide — removed in mature form. The helical transmembrane segment at 131–151 (GYGVCLTLLTALLGLGSWLIP) threads the bilayer. The Cytoplasmic segment spans residues 152-153 (RS).

It belongs to the snake toxin-like superfamily. Post-translationally, GPI-anchored. Expressed in all tissues that form septate junctions, including hindgut, trachea, epidermis and dorsal pouch. Expressed in subperineurial glial cells that form the hemolymph-brain barrier of the central nervous system.

The protein localises to the endosome membrane. It localises to the endoplasmic reticulum membrane. The protein resides in the cell membrane. It is found in the cell junction. Its subcellular location is the septate junction. Its function is as follows. Required for septate junction assembly, possibly by organizing the preassembly and transport of septate junction proteins such as dlg1/disks large 1 and Nrx-IV/Neurexin-IV. Involved in paracellular barrier functions of trachea, hindgut and salivary gland mediated by epithelial cell septate junctions. Involved in paracellular barrier functions of the hemolymph-brain barrier (insect blood-brain barrier) mediated by glial cell septate junctions. Required for maintenance of septate junctions in imaginal disk epithelial cells. Involved in the epithelial cell wound-healing response. Directly or indirectly mediates cell-cell adhesion during septate junction formation. This is UPAR/Ly6 domain-containing protein cold from Drosophila melanogaster (Fruit fly).